A 187-amino-acid chain; its full sequence is ATP synthase subunit delta (187 aa).

This sequence belongs to the ATPase delta chain family. F-type ATPases have 2 components, F(1) - the catalytic core - and F(0) - the membrane proton channel. F(1) has five subunits: alpha(3), beta(3), gamma(1), delta(1), epsilon(1). F(0) has three main subunits: a(1), b(2) and c(10-14). The alpha and beta chains form an alternating ring which encloses part of the gamma chain. F(1) is attached to F(0) by a central stalk formed by the gamma and epsilon chains, while a peripheral stalk is formed by the delta and b chains.

Its subcellular location is the cell membrane. Functionally, f(1)F(0) ATP synthase produces ATP from ADP in the presence of a proton or sodium gradient. F-type ATPases consist of two structural domains, F(1) containing the extramembraneous catalytic core and F(0) containing the membrane proton channel, linked together by a central stalk and a peripheral stalk. During catalysis, ATP synthesis in the catalytic domain of F(1) is coupled via a rotary mechanism of the central stalk subunits to proton translocation. This protein is part of the stalk that links CF(0) to CF(1). It either transmits conformational changes from CF(0) to CF(1) or is implicated in proton conduction. The polypeptide is ATP synthase subunit delta (Mesomycoplasma hyopneumoniae (strain 232) (Mycoplasma hyopneumoniae)).